Here is a 415-residue protein sequence, read N- to C-terminus: Very late expression factor 1 (415 aa).

Positions 171-357 (REIINTILDC…DESDDNDEDD (187 aa)) constitute a Tyr recombinase domain. Active-site residues include Arg214, Lys242, Arg307, and His330. Positions 339-415 (YLNKYDVGVD…GDDADLLSFN (77 aa)) are disordered. The active-site O-(3'-phospho-DNA)-tyrosine intermediate is the Tyr343. The span at 346–363 (GVDESDDNDEDDDDDEND) shows a compositional bias: acidic residues. A compositionally biased stretch (low complexity) spans 375–404 (NISNYDINNSSSGNSSSNNTSGNDFNNNIS).

The protein belongs to the 'phage' integrase family.

In terms of biological role, involved in very late gene activation. This chain is Very late expression factor 1 (VLF-1), found in Heliothis zea nuclear polyhedrosis virus (HzSNPV).